The sequence spans 124 residues: Small ribosomal subunit protein uS12 (124 aa).

Position 89 is a 3-methylthioaspartic acid (aspartate 89).

The protein belongs to the universal ribosomal protein uS12 family. Part of the 30S ribosomal subunit. Contacts proteins S8 and S17. May interact with IF1 in the 30S initiation complex.

Its function is as follows. With S4 and S5 plays an important role in translational accuracy. Interacts with and stabilizes bases of the 16S rRNA that are involved in tRNA selection in the A site and with the mRNA backbone. Located at the interface of the 30S and 50S subunits, it traverses the body of the 30S subunit contacting proteins on the other side and probably holding the rRNA structure together. The combined cluster of proteins S8, S12 and S17 appears to hold together the shoulder and platform of the 30S subunit. In Glaesserella parasuis serovar 5 (strain SH0165) (Haemophilus parasuis), this protein is Small ribosomal subunit protein uS12.